Consider the following 85-residue polypeptide: Augerpeptide-s6a (85 aa).

The first 20 residues, 1–20 (MTLTMSTVVFFSLILLTLGL), serve as a signal peptide directing secretion. Positions 21–43 (QPKDKDEGVMGRSRLGKRGLLMR) are excised as a propeptide. 3 cysteine pairs are disulfide-bonded: cysteine 54–cysteine 65, cysteine 58–cysteine 70, and cysteine 64–cysteine 81.

Expressed by the venom duct.

The protein resides in the secreted. This Terebra subulata (Chocolate spotted auger) protein is Augerpeptide-s6a.